The following is a 262-amino-acid chain: Putative ankyrin repeat protein R848 (262 aa).

ANK repeat units follow at residues 8–37 (SNDY…NVTH), 38–67 (DNNY…DIRD), 68–97 (CRDY…NIRA), 99–127 (DDYA…NFRA), 128–157 (DNDY…DIRA), 159–187 (DDYA…DFRS), and 189–217 (NNAS…DVNT).

This chain is Putative ankyrin repeat protein R848, found in Acanthamoeba polyphaga (Amoeba).